The following is a 565-amino-acid chain: Proline--tRNA ligase (565 aa).

It belongs to the class-II aminoacyl-tRNA synthetase family. ProS type 1 subfamily. In terms of assembly, homodimer.

Its subcellular location is the cytoplasm. The enzyme catalyses tRNA(Pro) + L-proline + ATP = L-prolyl-tRNA(Pro) + AMP + diphosphate. In terms of biological role, catalyzes the attachment of proline to tRNA(Pro) in a two-step reaction: proline is first activated by ATP to form Pro-AMP and then transferred to the acceptor end of tRNA(Pro). As ProRS can inadvertently accommodate and process non-cognate amino acids such as alanine and cysteine, to avoid such errors it has two additional distinct editing activities against alanine. One activity is designated as 'pretransfer' editing and involves the tRNA(Pro)-independent hydrolysis of activated Ala-AMP. The other activity is designated 'posttransfer' editing and involves deacylation of mischarged Ala-tRNA(Pro). The misacylated Cys-tRNA(Pro) is not edited by ProRS. The polypeptide is Proline--tRNA ligase (Lactobacillus delbrueckii subsp. bulgaricus (strain ATCC 11842 / DSM 20081 / BCRC 10696 / JCM 1002 / NBRC 13953 / NCIMB 11778 / NCTC 12712 / WDCM 00102 / Lb 14)).